We begin with the raw amino-acid sequence, 314 residues long: Phospholipid phosphatase-related protein type 5 (314 aa).

The next 6 membrane-spanning stretches (helical) occupy residues 5–25, 61–81, 120–140, 194–214, 223–243, and 250–270; these read FSLT…VMLA, IPPV…IIVG, FLGI…AGQV, AALS…TIKA, VLCL…VAEY, and VIAG…CVVN.

Belongs to the PA-phosphatase related phosphoesterase family.

Its subcellular location is the cell membrane. In terms of biological role, induces filopodia formation and promotes neurite growth. The polypeptide is Phospholipid phosphatase-related protein type 5 (Xenopus laevis (African clawed frog)).